The following is a 282-amino-acid chain: ATP phosphoribosyltransferase (282 aa).

It belongs to the ATP phosphoribosyltransferase family. Long subfamily. Requires Mg(2+) as cofactor.

It localises to the cytoplasm. The catalysed reaction is 1-(5-phospho-beta-D-ribosyl)-ATP + diphosphate = 5-phospho-alpha-D-ribose 1-diphosphate + ATP. Its pathway is amino-acid biosynthesis; L-histidine biosynthesis; L-histidine from 5-phospho-alpha-D-ribose 1-diphosphate: step 1/9. Feedback inhibited by histidine. Functionally, catalyzes the condensation of ATP and 5-phosphoribose 1-diphosphate to form N'-(5'-phosphoribosyl)-ATP (PR-ATP). Has a crucial role in the pathway because the rate of histidine biosynthesis seems to be controlled primarily by regulation of HisG enzymatic activity. The polypeptide is ATP phosphoribosyltransferase (Micrococcus luteus (strain ATCC 4698 / DSM 20030 / JCM 1464 / CCM 169 / CCUG 5858 / IAM 1056 / NBRC 3333 / NCIMB 9278 / NCTC 2665 / VKM Ac-2230) (Micrococcus lysodeikticus)).